We begin with the raw amino-acid sequence, 887 residues long: 3-hydroxy-3-methylglutaryl-coenzyme A reductase (887 aa).

At 1 to 9 the chain is on the cytoplasmic side; that stretch reads MLSRLFRMH. A helical membrane pass occupies residues 10–39; sequence GLFVASHPWEVIVGTVTLTICMMSMNMFTG. The Lumenal portion of the chain corresponds to 40 to 56; sequence NNKICGWNYECPKFEED. A helical membrane pass occupies residues 57–78; that stretch reads VLSSDIIILTITRCIAILYIYF. Positions 61-218 constitute an SSD domain; sequence DIIILTITRC…MTFFPACVSL (158 aa). Positions 75–78 match the INSIG-binding motif motif; sequence YIYF. Topologically, residues 79-89 are cytoplasmic; the sequence is QFQNLRQLGSK. A Glycyl lysine isopeptide (Lys-Gly) (interchain with G-Cter in ubiquitin) cross-link involves residue lysine 89. Residues 90–114 form a helical membrane-spanning segment; the sequence is YILGIAGLFTIFSSFVFSTVVIHFL. The Lumenal portion of the chain corresponds to 115 to 123; the sequence is DKELTGLNE. Residues 124–149 form a helical membrane-spanning segment; that stretch reads ALPFFLLLIDLSRASALAKFALSSNS. Residues 150 to 159 lie on the Cytoplasmic side of the membrane; it reads QDEVRENIAR. Residues 160-187 form a helical membrane-spanning segment; that stretch reads GMAILGPTFTLDALVECLVIGVGTMSGV. Over 188–191 the chain is Lumenal; it reads RQLE. A helical transmembrane segment spans residues 192–220; the sequence is IMCCFGCMSVLANYFVFMTFFPACVSLVL. Residues 221 to 248 lie on the Cytoplasmic side of the membrane; it reads ELSRESREGRPIWQLSHFARVLEEEENK. Lysine 248 is covalently cross-linked (Glycyl lysine isopeptide (Lys-Gly) (interchain with G-Cter in ubiquitin)). The chain crosses the membrane as a helical span at residues 249-275; that stretch reads PNPVTQRVKMIMSLGLVLVHAHSRWIA. At 276 to 314 the chain is on the lumenal side; it reads DPSPQNSTAEQAKVSLGLDEDVSKRIEPSVSLWQFYLSK. An N-linked (GlcNAc...) asparagine glycan is attached at asparagine 281. Residues 315-339 form a helical membrane-spanning segment; the sequence is MISMDIEQVITLSLAFLLAVKYIFF. Residues 340–887 are Cytoplasmic-facing; sequence EQAETESTLS…LQGTCTKKAA (548 aa). Residues glutamate 558, lysine 690, and aspartate 766 each act as charge relay system in the active site. The active-site Proton donor is the histidine 865. Position 871 is a phosphoserine (serine 871).

It belongs to the HMG-CoA reductase family. Homotetramer. Homodimer. Interacts (via its SSD) with INSIG1; the interaction, accelerated by sterols, leads to the recruitment of HMGCR to AMFR/gp78 for its ubiquitination by the sterol-mediated ERAD pathway. Interacts with UBIAD1. In terms of processing, undergoes sterol-mediated ubiquitination and ER-associated degradation (ERAD). Accumulation of sterols in the endoplasmic reticulum (ER) membrane, triggers binding of the reductase to the ER membrane protein INSIG1 or INSIG2. The INSIG1 binding leads to the recruitment of the ubiquitin ligase, AMFR/gp78, RNF139 or RNF145, initiating ubiquitination of the reductase. The ubiquitinated reductase is then extracted from the ER membrane and delivered to cytosolic 26S proteosomes by a mechanism probably mediated by the ATPase Valosin-containing protein VCP/p97. The INSIG2-binding leads to the recruitment of the ubiquitin ligase RNF139, initiating ubiquitination of the reductase. Lys-248 is the main site of ubiquitination. Ubiquitination is enhanced by the presence of a geranylgeranylated protein. N-glycosylated. Deglycosylated by NGLY1 on release from the endoplasmic reticulum (ER) in a sterol-mediated manner. Post-translationally, phosphorylated. Phosphorylation at Ser-871 reduces the catalytic activity.

It localises to the endoplasmic reticulum membrane. The protein resides in the peroxisome membrane. The catalysed reaction is (R)-mevalonate + 2 NADP(+) + CoA = (3S)-3-hydroxy-3-methylglutaryl-CoA + 2 NADPH + 2 H(+). It functions in the pathway metabolic intermediate biosynthesis; (R)-mevalonate biosynthesis; (R)-mevalonate from acetyl-CoA: step 3/3. Its activity is regulated as follows. Regulated by a negative feedback mechanism through sterols and non-sterol metabolites derived from mevalonate. Phosphorylation at Ser-871 down-regulates the catalytic activity. Its function is as follows. Catalyzes the conversion of (3S)-hydroxy-3-methylglutaryl-CoA (HMG-CoA) to mevalonic acid, the rate-limiting step in the synthesis of cholesterol and other isoprenoids, thus plays a critical role in cellular cholesterol homeostasis. The chain is 3-hydroxy-3-methylglutaryl-coenzyme A reductase (Hmgcr) from Mus musculus (Mouse).